The following is a 445-amino-acid chain: Chromosomal replication initiator protein DnaA (445 aa).

The tract at residues 1–73 (MSPNSTLWQT…NELATKYSST (73 aa)) is domain I, interacts with DnaA modulators. The domain II stretch occupies residues 73–102 (TPVRLKFVSQEEVIEEPVADRKLTIDYRQG). A domain III, AAA+ region region spans residues 103–323 (NLNSTYTFDS…GALIRLISYA (221 aa)). Gly-147, Gly-149, Lys-150, and Thr-151 together coordinate ATP. Residues 324–445 (QTFNLEITMN…KFAVDSIVKK (122 aa)) form a domain IV, binds dsDNA region.

It belongs to the DnaA family. Oligomerizes as a right-handed, spiral filament on DNA at oriC.

It localises to the cytoplasm. Functionally, plays an essential role in the initiation and regulation of chromosomal replication. ATP-DnaA binds to the origin of replication (oriC) to initiate formation of the DNA replication initiation complex once per cell cycle. Binds the DnaA box (a 9 base pair repeat at the origin) and separates the double-stranded (ds)DNA. Forms a right-handed helical filament on oriC DNA; dsDNA binds to the exterior of the filament while single-stranded (ss)DNA is stabiized in the filament's interior. The ATP-DnaA-oriC complex binds and stabilizes one strand of the AT-rich DNA unwinding element (DUE), permitting loading of DNA polymerase. After initiation quickly degrades to an ADP-DnaA complex that is not apt for DNA replication. Binds acidic phospholipids. This is Chromosomal replication initiator protein DnaA from Acholeplasma laidlawii.